The chain runs to 304 residues: Protein transport protein sec13 (304 aa).

WD repeat units lie at residues G12–V51, G56–I97, L102–N143, A147–K203, G211–W253, and N259–N298.

The protein belongs to the WD repeat SEC13 family. As to quaternary structure, the COPII coat is composed of at least 5 proteins: the sec23/24 complex, the sec13/31 complex, and the protein vtr-7/sar1. Component of the nuclear pore complex (NPC). NPC constitutes the exclusive means of nucleocytoplasmic transport. NPCs allow the passive diffusion of ions and small molecules and the active, nuclear transport receptor-mediated bidirectional transport of macromolecules such as proteins, RNAs, ribonucleoparticles (RNPs), and ribosomal subunits across the nuclear envelope. Due to its 8-fold rotational symmetry, all subunits are present with 8 copies or multiples thereof.

It is found in the cytoplasmic vesicle. Its subcellular location is the COPII-coated vesicle membrane. It localises to the endoplasmic reticulum membrane. The protein localises to the nucleus. The protein resides in the nuclear pore complex. Its function is as follows. Component of the coat protein complex II (COPII) which promotes the formation of transport vesicles from the endoplasmic reticulum (ER). The coat has two main functions, the physical deformation of the endoplasmic reticulum membrane into vesicles and the selection of cargo molecules. It also functions as a component of the nuclear pore complex (NPC). NPC components, collectively referred to as nucleoporins (NUPs), can play the role of both NPC structural components and of docking or interaction partners for transiently associated nuclear transport factors. Nup-20/sec13 is required for efficient mRNA export from the nucleus to the cytoplasm and for correct nuclear pore biogenesis and distribution. In Neurospora crassa (strain ATCC 24698 / 74-OR23-1A / CBS 708.71 / DSM 1257 / FGSC 987), this protein is Protein transport protein sec13 (nup-20).